Reading from the N-terminus, the 421-residue chain is Histidine--tRNA ligase (421 aa).

It belongs to the class-II aminoacyl-tRNA synthetase family. As to quaternary structure, homodimer.

The protein resides in the cytoplasm. It carries out the reaction tRNA(His) + L-histidine + ATP = L-histidyl-tRNA(His) + AMP + diphosphate + H(+). The chain is Histidine--tRNA ligase from Thermus thermophilus (strain ATCC BAA-163 / DSM 7039 / HB27).